The following is a 437-amino-acid chain: GTPase Era, mitochondrial (437 aa).

Residues M1–Q20 constitute a mitochondrion transit peptide. The Era-type G domain occupies R112–G330. The G1 stretch occupies residues G120 to S127. G120–S127 is a GTP binding site. The tract at residues H146–C150 is G2. The G3 stretch occupies residues D167–G170. D167–I171 lines the GTP pocket. A Phosphoserine modification is found at S173. Position 236 to 239 (N236 to D239) interacts with GTP. Positions N236–D239 are G4. The tract at residues L270–R292 is disordered. The segment at L308–A310 is G5. In terms of domain architecture, KH type-2 spans L360–K437.

This sequence belongs to the TRAFAC class TrmE-Era-EngA-EngB-Septin-like GTPase superfamily. Era GTPase family.

The protein resides in the mitochondrion matrix. It localises to the mitochondrion inner membrane. Probable GTPase that plays a role in the mitochondrial ribosomal small subunit assembly. Specifically binds the 12S mitochondrial rRNA (12S mt-rRNA) to a 33 nucleotide section delineating the 3' terminal stem-loop region. May act as a chaperone that protects the 12S mt-rRNA on the 28S mitoribosomal subunit during ribosomal small subunit assembly. In Mus musculus (Mouse), this protein is GTPase Era, mitochondrial (Eral1).